The sequence spans 348 residues: D-alanine--D-alanine ligase (348 aa).

Residues 132–334 (KRVLESADIP…YAELIEELVR (203 aa)) enclose the ATP-grasp domain. 162–217 (EAVLSYPVFVKPANMGSSVGISKAESEEELRAAILLALTYDSRILIEQGVLAREIE) contributes to the ATP binding site. Asp288, Glu301, and Asn303 together coordinate Mg(2+).

Belongs to the D-alanine--D-alanine ligase family. It depends on Mg(2+) as a cofactor. Mn(2+) serves as cofactor.

The protein resides in the cytoplasm. It carries out the reaction 2 D-alanine + ATP = D-alanyl-D-alanine + ADP + phosphate + H(+). The protein operates within cell wall biogenesis; peptidoglycan biosynthesis. Its function is as follows. Cell wall formation. This Streptococcus equi subsp. zooepidemicus (strain MGCS10565) protein is D-alanine--D-alanine ligase.